Here is a 76-residue protein sequence, read N- to C-terminus: Small ribosomal subunit protein bS21C (76 aa).

Positions 52 to 76 (GRQRKLARKQMQREGLLPTKPRKDK) are disordered.

This sequence belongs to the bacterial ribosomal protein bS21 family.

The sequence is that of Small ribosomal subunit protein bS21C (rpsU3) from Agrobacterium fabrum (strain C58 / ATCC 33970) (Agrobacterium tumefaciens (strain C58)).